The sequence spans 159 residues: ATP synthase subunit b (159 aa).

A helical membrane pass occupies residues 8-28 (ILATIINFIILILILKHFFWD).

Belongs to the ATPase B chain family. F-type ATPases have 2 components, F(1) - the catalytic core - and F(0) - the membrane proton channel. F(1) has five subunits: alpha(3), beta(3), gamma(1), delta(1), epsilon(1). F(0) has three main subunits: a(1), b(2) and c(10-14). The alpha and beta chains form an alternating ring which encloses part of the gamma chain. F(1) is attached to F(0) by a central stalk formed by the gamma and epsilon chains, while a peripheral stalk is formed by the delta and b chains.

The protein localises to the cell membrane. Its function is as follows. F(1)F(0) ATP synthase produces ATP from ADP in the presence of a proton or sodium gradient. F-type ATPases consist of two structural domains, F(1) containing the extramembraneous catalytic core and F(0) containing the membrane proton channel, linked together by a central stalk and a peripheral stalk. During catalysis, ATP synthesis in the catalytic domain of F(1) is coupled via a rotary mechanism of the central stalk subunits to proton translocation. In terms of biological role, component of the F(0) channel, it forms part of the peripheral stalk, linking F(1) to F(0). The chain is ATP synthase subunit b from Clostridium perfringens (strain SM101 / Type A).